Consider the following 231-residue polypeptide: Phosphatidate cytidylyltransferase (231 aa).

The next 6 helical transmembrane spans lie at 33-53 (FVVA…LVAI), 67-87 (IMYL…LIFL), 95-115 (WLIM…MIGG), 133-153 (WSGL…ISFI), 167-187 (IYLF…DLFI), and 206-226 (HGGV…LFFI).

Belongs to the CDS family.

It localises to the cell membrane. The catalysed reaction is a 1,2-diacyl-sn-glycero-3-phosphate + CTP + H(+) = a CDP-1,2-diacyl-sn-glycerol + diphosphate. Its pathway is phospholipid metabolism; CDP-diacylglycerol biosynthesis; CDP-diacylglycerol from sn-glycerol 3-phosphate: step 3/3. The sequence is that of Phosphatidate cytidylyltransferase (cdsA) from Rickettsia bellii (strain RML369-C).